A 520-amino-acid chain; its full sequence is Glucose-1-phosphate adenylyltransferase small subunit, chloroplastic (520 aa).

A chloroplast-targeting transit peptide spans 1–71; that stretch reads MATMAAIGSL…RTPSIVSPKA (71 aa). Positions 1 to 81 are disordered; it reads MATMAAIGSL…VSDSQNSQTC (81 aa). The segment covering 14 to 27 has biased composition (low complexity); it reads SSSSNHTRRLSSSS. Polar residues predominate over residues 28–51; it reads QRKTLSFSSSSLTGEKLNPTQEII.

Belongs to the bacterial/plant glucose-1-phosphate adenylyltransferase family. Heterotetramer. In terms of tissue distribution, leaves.

The protein localises to the plastid. It localises to the chloroplast. The enzyme catalyses alpha-D-glucose 1-phosphate + ATP + H(+) = ADP-alpha-D-glucose + diphosphate. It functions in the pathway glycan biosynthesis; starch biosynthesis. Activated by 3'phosphoglycerate, inhibited by orthophosphate. Allosteric regulation. This protein plays a role in synthesis of starch. It catalyzes the synthesis of the activated glycosyl donor, ADP-glucose from Glc-1-P and ATP. This chain is Glucose-1-phosphate adenylyltransferase small subunit, chloroplastic (AGPS1), found in Brassica napus (Rape).